The following is a 411-amino-acid chain: Meiotic driver wtf33 (411 aa).

Residues 1–95 form a disordered region; it reads MKNKYYPLRS…ENHSSGTADN (95 aa). Basic and acidic residues predominate over residues 11-29; it reads SMDELSTKNDNEIDLEKGP. The span at 57–72 shows a compositional bias: polar residues; sequence GANNPNLFNTDESTTP. A run of 6 helical transmembrane segments spans residues 104–124, 137–157, 244–264, 281–301, 303–323, and 336–356; these read AILS…YLTY, WVYF…LWCF, EMMI…FGCV, TISA…WTLW, ALSG…LVNG, and GYEI…LYEM.

Belongs to the WTF family. Homomer. Forms protein aggregates. The two isoforms can interact with each other and with themselves. High sequence similarity is required for their interaction.

Its subcellular location is the spore membrane. The protein localises to the vacuole membrane. The protein resides in the ascus epiplasm. It is found in the cytoplasm. It localises to the endoplasmic reticulum membrane. Its function is as follows. Promotes unequal transmission of alleles from the parental zygote to progeny spores by acting as poison/antidote system where the poison and antidote proteins are produced from the same locus; the poison component is trans-acting and targets all spores within an ascus whereas the antidote component is spore-specific, leading to poisoning of all progeny that do not inherit the allele. In terms of biological role, localizes isoform 2 to the vacuole thereby facilitating its degradation. Functionally, forms toxic aggregates that disrupt spore maturation. This chain is Meiotic driver wtf33, found in Schizosaccharomyces kambucha (Fission yeast).